The sequence spans 65 residues: Large ribosomal subunit protein bL35 (65 aa).

Positions 24 to 48 are disordered; that stretch reads RRKAGKSHLLEHKSSDKKRSMSKTT. Residues 31 to 42 are compositionally biased toward basic and acidic residues; sequence HLLEHKSSDKKR.

Belongs to the bacterial ribosomal protein bL35 family.

In Nostoc punctiforme (strain ATCC 29133 / PCC 73102), this protein is Large ribosomal subunit protein bL35.